We begin with the raw amino-acid sequence, 174 residues long: Shikimate kinase (174 aa).

G15–T20 contacts ATP. Position 19 (S19) interacts with Mg(2+). The substrate site is built by D37, R61, and G82. R120 contacts ATP. R138 is a binding site for substrate.

Belongs to the shikimate kinase family. As to quaternary structure, monomer. The cofactor is Mg(2+).

It localises to the cytoplasm. It carries out the reaction shikimate + ATP = 3-phosphoshikimate + ADP + H(+). It participates in metabolic intermediate biosynthesis; chorismate biosynthesis; chorismate from D-erythrose 4-phosphate and phosphoenolpyruvate: step 5/7. Its function is as follows. Catalyzes the specific phosphorylation of the 3-hydroxyl group of shikimic acid using ATP as a cosubstrate. The sequence is that of Shikimate kinase from Staphylococcus aureus (strain MSSA476).